The chain runs to 231 residues: NADH-ubiquinone oxidoreductase chain 4 (231 aa).

The next 6 helical transmembrane spans lie at 1 to 21 (PIAGSMVLAAILLKLGGYGII), 34 to 54 (MFLPFLVLALWGAILANLTCL), 63 to 85 (IAYSSISHMGLVVAAIIIQTPWG), 89 to 111 (AMALMIAHGFTSSALFCLANTTY), 118 to 138 (ILILTRGFHNILPMATTWWLL), and 169 to 189 (TIILLGMSMLITASYSLHMFL).

This sequence belongs to the complex I subunit 4 family.

The protein resides in the mitochondrion membrane. It catalyses the reaction a ubiquinone + NADH + 5 H(+)(in) = a ubiquinol + NAD(+) + 4 H(+)(out). In terms of biological role, core subunit of the mitochondrial membrane respiratory chain NADH dehydrogenase (Complex I) that is believed to belong to the minimal assembly required for catalysis. Complex I functions in the transfer of electrons from NADH to the respiratory chain. The immediate electron acceptor for the enzyme is believed to be ubiquinone. This is NADH-ubiquinone oxidoreductase chain 4 (MT-ND4) from Trimeresurus cantori (Cantor's pit viper).